The sequence spans 357 residues: Peptide chain release factor 1 (357 aa).

An N5-methylglutamine modification is found at Gln-232. Over residues 284-304 (AERAAERKGQIGSGDRSERIR) the composition is skewed to basic and acidic residues. A disordered region spans residues 284-308 (AERAAERKGQIGSGDRSERIRTYNY).

It belongs to the prokaryotic/mitochondrial release factor family. In terms of processing, methylated by PrmC. Methylation increases the termination efficiency of RF1.

It is found in the cytoplasm. Functionally, peptide chain release factor 1 directs the termination of translation in response to the peptide chain termination codons UAG and UAA. The chain is Peptide chain release factor 1 from Maricaulis maris (strain MCS10) (Caulobacter maris).